We begin with the raw amino-acid sequence, 625 residues long: MKRKLDANNVPSPEDSAGKSITAHSFETLKLDPRLLQALTQQKFTKPTPIQAEAIPLALDGKDVLARAKTGSGKTAAYLLPVLQSILQQKRNTPAHKSISALILVPTRELAEQVHRTAISFSAFSGKHVRSVNLTQKVSDAVQRSLLADLPDIVVSTPARAVANVNSSALSLERLTHLVIDEADLVLSYGYEEDMQSLAKAVPRGVQTFLMSATFTSEVDTLKGLFCRNPVVLKLEEKEDEGAGISQFVVRRCAEDEKFLLTYVIFKLQLVKGKCIIFVGDVDRCYRLKLFLEQFGIRSCVLNSELPVNSRIHVVQEFNKGVYDIIIAVDDQEVLGELRKNSKKQPRKSDQCSRDSEYDGAQTSRNNDQYSSEDDAETQPSKRPKKSAKEKDYGISRGIDFQNVACVLNFDLPTTSKSYTHRIGRTGRAGKTGMALSFVIPSDQFGKHKPTSIPSAKHDEAMLSKIIKRQDKLGREVKPYHFDMKQVDAFRYRMSDALRAVTRVAVQEARAREIRQELVKSEKLKRHFEENPEELRQLRHDGELRAARVQAHLKHVPDYLMPTKGRGSLSIGTGADVGFVGFKKTHENVIRKAREKNKGRGRGGKAGRGGKRVDPLKSFNSGGKH.

Residues 1-21 are disordered; the sequence is MKRKLDANNVPSPEDSAGKSI. The Q motif signature appears at 24–52; that stretch reads HSFETLKLDPRLLQALTQQKFTKPTPIQA. Positions 55-233 constitute a Helicase ATP-binding domain; the sequence is IPLALDGKDV…GLFCRNPVVL (179 aa). Position 68 to 75 (68 to 75) interacts with ATP; it reads AKTGSGKT. The DEAD box motif lies at 181-184; it reads DEAD. Residues 260-485 enclose the Helicase C-terminal domain; the sequence is LLTYVIFKLQ…EVKPYHFDMK (226 aa). Disordered regions lie at residues 339 to 393 and 590 to 625; these read RKNS…EKDY and IRKAREKNKGRGRGGKAGRGGKRVDPLKSFNSGGKH. A compositionally biased stretch (basic and acidic residues) spans 347–357; it reads RKSDQCSRDSE. A compositionally biased stretch (polar residues) spans 361 to 370; that stretch reads AQTSRNNDQY. Positions 599 to 610 are enriched in basic residues; sequence GRGRGGKAGRGG.

This sequence belongs to the DEAD box helicase family. DDX56/DBP9 subfamily.

The protein localises to the nucleus. It is found in the nucleolus. The enzyme catalyses ATP + H2O = ADP + phosphate + H(+). Its function is as follows. ATP-binding RNA helicase involved in the biogenesis of 60S ribosomal subunits and is required for the normal formation of 25S and 5.8S rRNAs. This Ajellomyces capsulatus (strain NAm1 / WU24) (Darling's disease fungus) protein is ATP-dependent RNA helicase DBP9 (DBP9).